The sequence spans 684 residues: Ski-like protein (684 aa).

Residues Lys50 and Lys70 each participate in a glycyl lysine isopeptide (Lys-Gly) (interchain with G-Cter in SUMO2) cross-link. Residues 420–454 are disordered; sequence SQSKELTKTEASKSISRQSEKAHSSGKLQKTVSYP. Position 452 is a phosphoserine (Ser452). Residues Lys489 and Lys527 each participate in a glycyl lysine isopeptide (Lys-Gly) (interchain with G-Cter in SUMO2) cross-link. A coiled-coil region spans residues 536-684; it reads RTYLKQQEKL…ILKSSKTAKE (149 aa).

This sequence belongs to the SKI family. Interacts with CPNE4 (via VWFA domain). Interacts with SMAD2, SMAD3 and RNF111. Isoform 1 interacts with WWP1. Post-translationally, ubiquitinated by RNF111 and ARK2C, promoting proteasomal degradation, leading to enhance the BMP-Smad signaling. In terms of tissue distribution, isoform SNON and isoform SNOA are widely expressed. Highest expression is found in skeletal muscle, followed by placenta and lung. Lowest expression in heart, brain and pancreas. Isoform SNOI expression is restricted to skeletal muscle.

Functionally, may have regulatory role in cell division or differentiation in response to extracellular signals. The polypeptide is Ski-like protein (SKIL) (Homo sapiens (Human)).